Reading from the N-terminus, the 890-residue chain is Alanine--tRNA ligase (890 aa).

His-567, His-571, Cys-680, and His-684 together coordinate Zn(2+).

This sequence belongs to the class-II aminoacyl-tRNA synthetase family. Zn(2+) serves as cofactor.

It localises to the cytoplasm. The enzyme catalyses tRNA(Ala) + L-alanine + ATP = L-alanyl-tRNA(Ala) + AMP + diphosphate. Its function is as follows. Catalyzes the attachment of alanine to tRNA(Ala) in a two-step reaction: alanine is first activated by ATP to form Ala-AMP and then transferred to the acceptor end of tRNA(Ala). Also edits incorrectly charged Ser-tRNA(Ala) and Gly-tRNA(Ala) via its editing domain. This Ruegeria pomeroyi (strain ATCC 700808 / DSM 15171 / DSS-3) (Silicibacter pomeroyi) protein is Alanine--tRNA ligase.